The chain runs to 183 residues: uncharacterized protein (183 aa).

Residues 1 to 182 (MFRVVHGDIT…VALKVLERDE (182 aa)) form the Macro domain.

This is an uncharacterized protein from Pyrococcus abyssi (strain GE5 / Orsay).